Consider the following 182-residue polypeptide: Phospholipase A2 inhibitor gamma subunit A (182 aa).

8 disulfides stabilise this stretch: Cys3–Cys27, Cys6–Cys13, Cys20–Cys48, Cys54–Cys75, Cys76–Cys81, Cys99–Cys124, Cys117–Cys146, and Cys150–Cys172. Asn157 is a glycosylation site (N-linked (GlcNAc...) asparagine).

Belongs to the CNF-like-inhibitor family. As to quaternary structure, heterotrimer of 2 subunits A and 1 subunit B. Post-translationally, N-glycosylation is not important for activity, since deglycosylation does not change its PLA2 inhibitory activity. As to expression, expressed by the liver.

Its subcellular location is the secreted. Its function is as follows. Strongly inhibits its own venom PLA2 and all other PLA2s tested including Elapid, Crotalid and Viperid venom PLA2s, as well as honeybee PLA2s. This Laticauda semifasciata (Black-banded sea krait) protein is Phospholipase A2 inhibitor gamma subunit A.